A 219-amino-acid polypeptide reads, in one-letter code: Orotate phosphoribosyltransferase (219 aa).

Lys-26 serves as a coordination point for 5-phospho-alpha-D-ribose 1-diphosphate. Orotate is bound at residue 34–35 (FF). 5-phospho-alpha-D-ribose 1-diphosphate is bound by residues 72–73 (YK), Arg-98, Lys-99, Lys-102, His-104, and 124–132 (DDVITAGTA). Thr-128 and Arg-156 together coordinate orotate.

The protein belongs to the purine/pyrimidine phosphoribosyltransferase family. PyrE subfamily. In terms of assembly, homodimer. The cofactor is Mg(2+).

The catalysed reaction is orotidine 5'-phosphate + diphosphate = orotate + 5-phospho-alpha-D-ribose 1-diphosphate. The protein operates within pyrimidine metabolism; UMP biosynthesis via de novo pathway; UMP from orotate: step 1/2. Catalyzes the transfer of a ribosyl phosphate group from 5-phosphoribose 1-diphosphate to orotate, leading to the formation of orotidine monophosphate (OMP). This Stenotrophomonas maltophilia (strain K279a) protein is Orotate phosphoribosyltransferase.